The primary structure comprises 100 residues: Small ribosomal subunit protein uS14c (100 aa).

Belongs to the universal ribosomal protein uS14 family. Part of the 30S ribosomal subunit.

Its subcellular location is the plastid. It localises to the chloroplast. Binds 16S rRNA, required for the assembly of 30S particles. The polypeptide is Small ribosomal subunit protein uS14c (Angiopteris evecta (Mule's foot fern)).